Consider the following 1021-residue polypeptide: Probable calcium-transporting ATPase 6, plasma membrane-type (1021 aa).

At 1–155 the chain is on the cytoplasmic side; it reads MEGGRSWSIE…RSFWMFVWDA (155 aa). The next 2 membrane-spanning stretches (helical) occupy residues 156–176 and 181–201; these read LHDL…VVGL and WPMG…VVLV. The Cytoplasmic portion of the chain corresponds to 202–241; that stretch reads TATSDYQQARKFMELDREKQKIYIRVTRDKKTKEVLVHDL. 2 helical membrane passes run 242–262 and 338–358; these read VVGD…GLFI and VATI…LVLL. The Cytoplasmic portion of the chain corresponds to 359-384; sequence ARFLADKGMHVGLLNWSANDALTIVN. The helical transmembrane segment at 385-405 threads the bilayer; sequence YFAIAVTIIVVAVPEGLPLAV. D441 functions as the 4-aspartylphosphate intermediate in the catalytic mechanism. Residues D740 and D744 each contribute to the Mg(2+) site. A helical membrane pass occupies residues 807–827; it reads IVALIVNFVSACIIGSAPLTA. At 828 to 829 the chain is on the cytoplasmic side; sequence VQ. Transmembrane regions (helical) follow at residues 830 to 850 and 879 to 899; these read LLWV…TEPP and GLYQ…LLSI. Over 900 to 942 the chain is Cytoplasmic; sequence EGPQSDKTINTLIFNSFVFCQVFNEINCREMEKINVLQGIFRN. The next 2 membrane-spanning stretches (helical) occupy residues 943 to 963 and 974 to 994; these read WIFV…VEFL and GELW…SVIL. Residues 995–1021 are Cytoplasmic-facing; the sequence is KCIPVEFNKTNTKPHGYELIPEGPEIL.

Belongs to the cation transport ATPase (P-type) (TC 3.A.3) family. Type IIB subfamily.

The protein resides in the membrane. The enzyme catalyses Ca(2+)(in) + ATP + H2O = Ca(2+)(out) + ADP + phosphate + H(+). With respect to regulation, activated by calmodulin. This magnesium-dependent enzyme catalyzes the hydrolysis of ATP coupled with the translocation of calcium from the cytosol out of the cell, into the endoplasmic reticulum, or into organelles. This chain is Probable calcium-transporting ATPase 6, plasma membrane-type, found in Oryza sativa subsp. japonica (Rice).